The following is a 1423-amino-acid chain: Protein Shroom2 (1423 aa).

Positions 1–101 (MRPSTVTSRI…PDHTLPKADA (101 aa)) are disordered. Positions 8-27 (SRIWWSESSSSSSHDLSGSW) are enriched in low complexity. 2 stretches are compositionally biased toward polar residues: residues 28 to 69 (EHTS…NSSI) and 83 to 93 (GSFSTCSSTPD). Position 103 is a phosphoserine (S103). The tract at residues 116–171 (ASRPGSSRQSQSTGDPQGLQDRPSSFLPRVPGNSSKSPRPEDNIEPKIATSGRSNF) is disordered. Over residues 119–130 (PGSSRQSQSTGD) the composition is skewed to polar residues. S185, S197, and S291 each carry phosphoserine. 5 disordered regions span residues 300–357 (SYHG…VNQK), 586–630 (TSFQ…SAPR), 758–855 (EILS…SGGQ), 872–930 (PSSS…KLTD), and 1045–1085 (VETP…KEKT). One can recognise an ASD1 domain in the interval 575 to 677 (LKEAQTRVLK…SEPEKINEVG (103 aa)). Over residues 761 to 771 (SEDRKVEKASE) the composition is skewed to basic and acidic residues. Phosphoserine occurs at positions 806, 830, 831, and 833. At T834 the chain carries Phosphothreonine. Residues 872–885 (PSSSVLSSAQPQDS) are compositionally biased toward low complexity. A compositionally biased stretch (polar residues) spans 891 to 923 (DPTSPQPEAQLSSKCQHLQTSTMETSRSPSPQF). S918 and S920 each carry phosphoserine. The span at 1054–1065 (PEPQPPSTPAPP) shows a compositional bias: pro residues. S1072 and S1329 each carry phosphoserine. Residues 1092–1418 (EELAREIVGK…QLKCLFDSLQ (327 aa)) form the ASD2 domain.

This sequence belongs to the shroom family. As to quaternary structure, interacts with F-actin.

The protein localises to the apical cell membrane. It is found in the cell junction. It localises to the tight junction. The protein resides in the cytoplasm. Its subcellular location is the cytoskeleton. May be involved in endothelial cell morphology changes during cell spreading. In the retinal pigment epithelium, may regulate the biogenesis of melanosomes and promote their association with the apical cell surface by inducing gamma-tubulin redistribution. This Rattus norvegicus (Rat) protein is Protein Shroom2 (Shroom2).